The primary structure comprises 207 residues: Octanoyltransferase (207 aa).

The BPL/LPL catalytic domain maps to 29–204 (AETRDELWVV…HLERHLSTSK (176 aa)). Substrate is bound by residues 68–75 (RGGQITYH), 135–137 (SLG), and 148–150 (GLS). Residue Cys166 is the Acyl-thioester intermediate of the active site.

Belongs to the LipB family.

The protein resides in the cytoplasm. It catalyses the reaction octanoyl-[ACP] + L-lysyl-[protein] = N(6)-octanoyl-L-lysyl-[protein] + holo-[ACP] + H(+). Its pathway is protein modification; protein lipoylation via endogenous pathway; protein N(6)-(lipoyl)lysine from octanoyl-[acyl-carrier-protein]: step 1/2. Catalyzes the transfer of endogenously produced octanoic acid from octanoyl-acyl-carrier-protein onto the lipoyl domains of lipoate-dependent enzymes. Lipoyl-ACP can also act as a substrate although octanoyl-ACP is likely to be the physiological substrate. The sequence is that of Octanoyltransferase from Chromobacterium violaceum (strain ATCC 12472 / DSM 30191 / JCM 1249 / CCUG 213 / NBRC 12614 / NCIMB 9131 / NCTC 9757 / MK).